We begin with the raw amino-acid sequence, 299 residues long: Taste receptor type 2 member 5 (299 aa).

Met1 is a topological domain (extracellular). The helical transmembrane segment at 2 to 22 threads the bilayer; that stretch reads LSAGLGLLMLVAVVEFLIGLI. Over 23–45 the chain is Cytoplasmic; it reads GNGVLVVWSFREWIRKFSWSSYN. The helical transmembrane segment at 46–66 threads the bilayer; sequence LIILGLAGCRFVLQWLIILDL. The Extracellular portion of the chain corresponds to 67 to 82; that stretch reads SLFPLFQSSRWLRYLS. The helical transmembrane segment at 83–103 threads the bilayer; the sequence is IFWVLVSQASLWFATFLSVFY. Topologically, residues 104-127 are cytoplasmic; the sequence is CKKITTFDHPAYLWLKQRAYNLSL. A helical transmembrane segment spans residues 128–148; that stretch reads WCLLGYFIINLLLTVQIGLMF. The Extracellular segment spans residues 149–175; sequence YHPPQGNSSIRYPFESWQYLYAFRLNS. A glycan (N-linked (GlcNAc...) asparagine) is linked at Asn155. Residues 176-196 form a helical membrane-spanning segment; the sequence is GSYLPLMVFLVSSGMLIVSLY. Topologically, residues 197-223 are cytoplasmic; it reads THHKKMKVHSAGRRDVRAKAHITALKS. Residues 224–244 form a helical membrane-spanning segment; that stretch reads LGCFLLLHLVYIMASPFSIAS. Residues 245-253 are Extracellular-facing; sequence KTYPPDLTS. A helical transmembrane segment spans residues 254-274; the sequence is VFIWETLMAAYPSLHSLILIM. Residues 275–299 are Cytoplasmic-facing; it reads GIPRVKQTCQKIXWKTVCARRCWGP.

It belongs to the G-protein coupled receptor T2R family.

It localises to the membrane. Functionally, receptor that may play a role in the perception of bitterness and is gustducin-linked. May play a role in sensing the chemical composition of the gastrointestinal content. The activity of this receptor may stimulate alpha gustducin, mediate PLC-beta-2 activation and lead to the gating of TRPM5. The sequence is that of Taste receptor type 2 member 5 (TAS2R5) from Pan troglodytes (Chimpanzee).